A 183-amino-acid polypeptide reads, in one-letter code: MIAIYPGSFDPITLGHLDLIQRGSRLFERVIVAVLRNPNKTPLFSVQQRLEQIRLSTQHLPNVEVDSFDGLTVNYAQMRHAQVLLRGLRAVSDFEVELQMAHTNKTLSTQIETVFLATSNEYSFLSSSVVREIARFGGSIDHLVPPHIALDIYQCYNHNSPMLNPISTEAIPPLKNISVEREA.

Ser-8 provides a ligand contact to substrate. ATP contacts are provided by residues 8 to 9 and His-16; that span reads SF. Positions 40, 72, and 86 each coordinate substrate. Residues 87 to 89, Glu-97, and 122 to 128 contribute to the ATP site; these read GLR and YSFLSSS.

The protein belongs to the bacterial CoaD family. In terms of assembly, homohexamer. Mg(2+) is required as a cofactor.

The protein localises to the cytoplasm. The enzyme catalyses (R)-4'-phosphopantetheine + ATP + H(+) = 3'-dephospho-CoA + diphosphate. It participates in cofactor biosynthesis; coenzyme A biosynthesis; CoA from (R)-pantothenate: step 4/5. Functionally, reversibly transfers an adenylyl group from ATP to 4'-phosphopantetheine, yielding dephospho-CoA (dPCoA) and pyrophosphate. This Nostoc punctiforme (strain ATCC 29133 / PCC 73102) protein is Phosphopantetheine adenylyltransferase.